The sequence spans 593 residues: Auxin response factor 12 (593 aa).

The TF-B3 DNA-binding region spans 126–228 (FTKVLTASDT…ELRVGIRRAR (103 aa)). Residues 511 to 592 (RTCTKVQMQG…MVKKIFIQKR (82 aa)) enclose the PB1 domain.

The protein belongs to the ARF family. Homodimers and heterodimers.

Its subcellular location is the nucleus. Functionally, auxin response factors (ARFs) are transcriptional factors that bind specifically to the DNA sequence 5'-TGTCTC-3' found in the auxin-responsive promoter elements (AuxREs). Could act as transcriptional activator or repressor. Formation of heterodimers with Aux/IAA proteins may alter their ability to modulate early auxin response genes expression. This Arabidopsis thaliana (Mouse-ear cress) protein is Auxin response factor 12 (ARF12).